The sequence spans 370 residues: Peptidyl-prolyl cis-trans isomerase D (370 aa).

At Ser5 the chain carries Phosphoserine. In terms of domain architecture, PPIase cyclophilin-type spans 19-183 (FFDVDIGGER…KLCVIAECGE (165 aa)). At Lys171 the chain carries N6-acetyllysine. Positions 185–215 (KEGDEWGIFPKDGSGDSHPDFPEDADIDLKD) are chaperone activity. Ser198 carries the phosphoserine modification. Residues 214 to 370 (KDVDKILLIS…EKAVYAKMFA (157 aa)) form an interaction with HSP90AB1 region. TPR repeat units lie at residues 223 to 256 (SEDLKNIGNTFFKSQNWEMAIKKYAKVLRYLDSS), 273 to 306 (LSCVLNIGACKLKMSNWQGAIDSCLEALEMDPSN), and 308 to 340 (KALYRKAQGWQGLKEYDQALADLKKAQEIAPGD).

This sequence belongs to the cyclophilin-type PPIase family. PPIase D subfamily. As to quaternary structure, identified in ESR1 or NR3C1/GCR steroid receptor-chaperone complexes. Found in HSP90 chaperone complexes with kinase clients LCK or EIF2AK1. Two monomers associate with one HSP90 homodimer. Interacts with HSP90AA1. Interacts with HSP90AB1; PPID and FKBP4 compete for binding to HSP90AB1 and the interaction is mutually exclusive with the PPID:HSPA8 interaction. Interacts with HSPA8; PPID and STIP1 but not FKBP4 compete for binding to HSPA8 and the interaction is mutually exclusive with the PPID:HSP90AB1 interaction. Interacts with S100A1 and S100A2; the interactions dissociate the PPID:HSP90AA1 interaction. Interacts with S100A6. Interacts with MYB, ILF2, XRCC6, RACK1 and RPS3. Interacts with cytoplasmic dynein 1 intermediate chain (DYNC1I1 or DYNC1I2).

The protein localises to the cytoplasm. It is found in the nucleus. Its subcellular location is the nucleolus. The protein resides in the nucleoplasm. The catalysed reaction is [protein]-peptidylproline (omega=180) = [protein]-peptidylproline (omega=0). Its activity is regulated as follows. Less sensitive to inhibition by cyclosporin A than is CYP-18. In terms of biological role, PPIase that catalyzes the cis-trans isomerization of proline imidic peptide bonds in oligopeptides and may therefore assist protein folding. Proposed to act as a co-chaperone in HSP90 complexes such as in unligated steroid receptors heterocomplexes. Different co-chaperones seem to compete for association with HSP90 thus establishing distinct HSP90-co-chaperone-receptor complexes with the potential to exert tissue-specific receptor activity control. May have a preference for estrogen receptor complexes and is not found in glucocorticoid receptor complexes. May be involved in cytoplasmic dynein-dependent movement of the receptor from the cytoplasm to the nucleus. May regulate MYB by inhibiting its DNA-binding activity. Involved in regulation of AHR signaling by promoting the formation of the AHR:ARNT dimer; the function is independent of HSP90 but requires the chaperone activity region. Involved in regulation of UV radiation-induced apoptosis. The polypeptide is Peptidyl-prolyl cis-trans isomerase D (Rattus norvegicus (Rat)).